We begin with the raw amino-acid sequence, 214 residues long: Large ribosomal subunit protein uL16 (214 aa).

Arg32 is subject to Citrulline. Residue Lys175 forms a Glycyl lysine isopeptide (Lys-Gly) (interchain with G-Cter in SUMO2) linkage. A Glycyl lysine isopeptide (Lys-Gly) (interchain with G-Cter in ubiquitin) cross-link involves residue Lys188.

It belongs to the universal ribosomal protein uL16 family. In terms of assembly, component of the large ribosomal subunit. Mature ribosomes consist of a small (40S) and a large (60S) subunit. The 40S subunit contains about 33 different proteins and 1 molecule of RNA (18S). The 60S subunit contains about 49 different proteins and 3 molecules of RNA (28S, 5.8S and 5S). Post-translationally, citrullinated by PADI4. In terms of processing, ufmylated by UFL1.

It localises to the cytoplasm. In terms of biological role, component of the large ribosomal subunit. Plays a role in the formation of actively translating ribosomes. May play a role in the embryonic brain development. The protein is Large ribosomal subunit protein uL16 of Homo sapiens (Human).